Consider the following 136-residue polypeptide: MTRPTSSAPSQRMLRVGEQVRAAITQVLQRGEVRDDIIEATVISISEVRMSPDLKIATAYVTPLGVSDHSIVIEALNRHAKFIRGRLGPQLRQMKYMPEVRFRDDTSFDNYKKIDELLRSPEVSRDLDSDSDSDEK.

The protein belongs to the RbfA family. In terms of assembly, monomer. Binds 30S ribosomal subunits, but not 50S ribosomal subunits or 70S ribosomes.

It is found in the cytoplasm. In terms of biological role, one of several proteins that assist in the late maturation steps of the functional core of the 30S ribosomal subunit. Associates with free 30S ribosomal subunits (but not with 30S subunits that are part of 70S ribosomes or polysomes). Required for efficient processing of 16S rRNA. May interact with the 5'-terminal helix region of 16S rRNA. This chain is Ribosome-binding factor A, found in Rhizobium etli (strain ATCC 51251 / DSM 11541 / JCM 21823 / NBRC 15573 / CFN 42).